Consider the following 212-residue polypeptide: Adenylate kinase (212 aa).

ATP is bound at residue 10–15 (GAGKGT). Positions 30–59 (STGDMFRAAMANQTEMGRLAKSYIDKGELV) are NMP. Residues Thr31, Arg36, 57–59 (ELV), 86–89 (GYPR), and Gln93 each bind AMP. The segment at 127–159 (GRIINRKTGETFHKVFNPPVDYKEEDYYQREDD) is LID. ATP-binding positions include Arg128 and 137 to 138 (TF). The AMP site is built by Arg156 and Arg167. Residue Gln195 participates in ATP binding.

As to quaternary structure, monomer.

The protein resides in the cytoplasm. The catalysed reaction is AMP + ATP = 2 ADP. Its pathway is purine metabolism; AMP biosynthesis via salvage pathway; AMP from ADP: step 1/1. In terms of biological role, catalyzes the reversible transfer of the terminal phosphate group between ATP and AMP. Plays an important role in cellular energy homeostasis and in adenine nucleotide metabolism. This is Adenylate kinase from Streptococcus pyogenes serotype M6 (strain ATCC BAA-946 / MGAS10394).